Consider the following 102-residue polypeptide: MDQQTAHEVRQTLIHADERYQAYTMDLEYMLRWEILRDGEFVQEGCSLSQESAREAVAHVLSHFRRQMLRRRTTAGKAKLRALLAIGTPSPEGRERRGERDI.

As to quaternary structure, the soluble methane monooxygenase (sMMO) consists of four components A/MMOH (composed of alpha/MmoX, beta/MmoY and gamma/MmoZ), B/MMOB (MmoB), C/MMOR (MmoC) and D/MMOD (MmoD).

The polypeptide is Methane monooxygenase component D (mmoD) (Methylosinus trichosporium).